Here is a 179-residue protein sequence, read N- to C-terminus: uncharacterized protein (179 aa).

This is an uncharacterized protein from Rickettsia conorii (strain ATCC VR-613 / Malish 7).